We begin with the raw amino-acid sequence, 163 residues long: MAWLDQSARSLFLAEFVSSFLLAMRYFFKPKVTLNYPFEKGPLSPRFRGEHALRRYPNGEERCIACKLCEAICPALAITIEAGPRRNDGTRRTTRYDIDMTKCIYCGLCQEACPVDAIVEGPNFEFATETREELMYDKNRLLANGDRWEREIAKNIALDAPYR.

2 4Fe-4S ferredoxin-type domains span residues 53–83 (LRRYPNGEERCIACKLCEAICPALAITIEAG) and 94–123 (TRYDIDMTKCIYCGLCQEACPVDAIVEGPN). [4Fe-4S] cluster contacts are provided by Cys63, Cys66, Cys69, Cys73, Cys103, Cys106, Cys109, and Cys113.

This sequence belongs to the complex I 23 kDa subunit family. In terms of assembly, NDH-1 is composed of 14 different subunits. Subunits NuoA, H, J, K, L, M, N constitute the membrane sector of the complex. It depends on [4Fe-4S] cluster as a cofactor.

The protein localises to the cell inner membrane. It carries out the reaction a quinone + NADH + 5 H(+)(in) = a quinol + NAD(+) + 4 H(+)(out). Its function is as follows. NDH-1 shuttles electrons from NADH, via FMN and iron-sulfur (Fe-S) centers, to quinones in the respiratory chain. The immediate electron acceptor for the enzyme in this species is believed to be ubiquinone. Couples the redox reaction to proton translocation (for every two electrons transferred, four hydrogen ions are translocated across the cytoplasmic membrane), and thus conserves the redox energy in a proton gradient. The polypeptide is NADH-quinone oxidoreductase subunit I (Parvibaculum lavamentivorans (strain DS-1 / DSM 13023 / NCIMB 13966)).